The primary structure comprises 549 residues: Neurofilament light polypeptide (549 aa).

An N-acetylserine modification is found at serine 2. The tract at residues 2-92 (SSFYSEPYYS…KSIRTQEKAQ (91 aa)) is head. Threonine 21 carries O-linked (GlcNAc) threonine glycosylation. Residue arginine 23 is modified to Asymmetric dimethylarginine; alternate. Arginine 23 is subject to Omega-N-methylarginine; alternate. O-linked (GlcNAc) serine glycosylation occurs at serine 27. Arginine 30 carries the post-translational modification Omega-N-methylarginine. Tyrosine 43 is subject to Phosphotyrosine. Residues serine 56, serine 66, and serine 102 each carry the phosphoserine modification. An IF rod domain is found at 89 to 400 (EKAQLQDLND…KLLEGEETRL (312 aa)). Residues 93–124 (LQDLNDRFASFIERVHELEQQNKVLEAQLLVL) are coil 1A. Residues 125–137 (RQKHSEPSRFRAL) form a linker 1 region. Positions 138–233 (YEQEIRDLRL…KVHEEEIAEL (96 aa)) are coil 1B. Positions 234 to 252 (QAQIQYAQISVEMDVSSKP) are linker 12. Residues 253–271 (DLSAALKDIRAQYEKLAAK) are coil 2A. The tract at residues 272-280 (NMQNAEEWF) is linker 2. The interval 281–396 (KSRFTVLTES…AAYRKLLEGE (116 aa)) is coil 2B. The interval 381 to 391 (ALDIEIAAYRK) is epitope; recognized by IF-specific monoclonal antibody. The tract at residues 397–443 (ETRLSFTSVGSLTTGYSQSSQVFGRSAYGGLQTSSYLMSTRSFPSYY) is tail, subdomain A. The tail stretch occupies residues 397–549 (ETRLSFTSVG…GEEQATKKKD (153 aa)). Positions 444–549 (TSHVQEEQIE…GEEQATKKKD (106 aa)) are tail, subdomain B (acidic). The tract at residues 462-549 (KAEEAKDEPP…GEEQATKKKD (88 aa)) is disordered. A compositionally biased stretch (acidic residues) spans 471-534 (PSEGEAEEEG…ETKEAEEEEK (64 aa)). Residue serine 472 is modified to Phosphoserine. The residue at position 526 (threonine 526) is a Phosphothreonine. Residues 535–549 (KDEGAGEEQATKKKD) are compositionally biased toward basic and acidic residues.

The protein belongs to the intermediate filament family. In terms of assembly, forms homodimers (in vitro). Forms heterodimers with NEFH or NEFM; which can further hetero-oligomerize (in vitro). Forms heterodimers with INA (in vitro). Interacts with ARHGEF28. Interacts with TRIM2. O-glycosylated. Post-translationally, phosphorylated in the head and rod regions by the PKC kinase PKN1, leading to the inhibition of polymerization. In terms of processing, ubiquitinated in the presence of TRIM2 and UBE2D1.

The protein resides in the cell projection. It localises to the axon. The protein localises to the cytoplasm. It is found in the cytoskeleton. Functionally, neurofilaments usually contain three intermediate filament proteins: NEFL, NEFM, and NEFH which are involved in the maintenance of neuronal caliber. May additionally cooperate with the neuronal intermediate filament proteins PRPH and INA to form neuronal filamentous networks. The protein is Neurofilament light polypeptide (NEFL) of Sus scrofa (Pig).